Here is a 260-residue protein sequence, read N- to C-terminus: Thymidylate synthase (260 aa).

Residue Arg-21 coordinates dUMP. Residue His-51 coordinates (6R)-5,10-methylene-5,6,7,8-tetrahydrofolate. Residue 122 to 123 coordinates dUMP; the sequence is RR. The active-site Nucleophile is Cys-142. DUMP is bound by residues 162-165, Asn-173, and 203-205; these read RSAD and HLY. Asp-165 is a binding site for (6R)-5,10-methylene-5,6,7,8-tetrahydrofolate. Residue Ala-259 participates in (6R)-5,10-methylene-5,6,7,8-tetrahydrofolate binding.

This sequence belongs to the thymidylate synthase family. Bacterial-type ThyA subfamily. As to quaternary structure, homodimer.

It is found in the cytoplasm. The enzyme catalyses dUMP + (6R)-5,10-methylene-5,6,7,8-tetrahydrofolate = 7,8-dihydrofolate + dTMP. Its pathway is pyrimidine metabolism; dTTP biosynthesis. Functionally, catalyzes the reductive methylation of 2'-deoxyuridine-5'-monophosphate (dUMP) to 2'-deoxythymidine-5'-monophosphate (dTMP) while utilizing 5,10-methylenetetrahydrofolate (mTHF) as the methyl donor and reductant in the reaction, yielding dihydrofolate (DHF) as a by-product. This enzymatic reaction provides an intracellular de novo source of dTMP, an essential precursor for DNA biosynthesis. This Methylococcus capsulatus (strain ATCC 33009 / NCIMB 11132 / Bath) protein is Thymidylate synthase.